A 530-amino-acid polypeptide reads, in one-letter code: Autoinducer-2 kinase (530 aa).

It belongs to the FGGY kinase family.

It is found in the cytoplasm. It carries out the reaction (S)-4,5-dihydroxypentane-2,3-dione + ATP = (2S)-2-hydroxy-3,4-dioxopentyl phosphate + ADP + H(+). In terms of biological role, catalyzes the phosphorylation of autoinducer-2 (AI-2) to phospho-AI-2, which subsequently inactivates the transcriptional regulator LsrR and leads to the transcription of the lsr operon. Phosphorylates the ring-open form of (S)-4,5-dihydroxypentane-2,3-dione (DPD), which is the precursor to all AI-2 signaling molecules, at the C5 position. The sequence is that of Autoinducer-2 kinase from Enterobacter sp. (strain 638).